Reading from the N-terminus, the 309-residue chain is 2-phospho-L-lactate transferase (309 aa).

7,8-didemethyl-8-hydroxy-5-deazariboflavin-binding residues include aspartate 48 and lysine 87.

This sequence belongs to the CofD family. Homodimer. Requires Mg(2+) as cofactor.

The catalysed reaction is (2S)-lactyl-2-diphospho-5'-guanosine + 7,8-didemethyl-8-hydroxy-5-deazariboflavin = oxidized coenzyme F420-0 + GMP + H(+). The protein operates within cofactor biosynthesis; coenzyme F420 biosynthesis. In terms of biological role, catalyzes the transfer of the 2-phospholactate moiety from (2S)-lactyl-2-diphospho-5'-guanosine to 7,8-didemethyl-8-hydroxy-5-deazariboflavin (FO) with the formation of oxidized coenzyme F420-0 and GMP. In Methanosarcina barkeri (strain Fusaro / DSM 804), this protein is 2-phospho-L-lactate transferase.